The following is a 298-amino-acid chain: Ethanolamine ammonia-lyase small subunit (298 aa).

Residues Val-210, Glu-231, and Cys-261 each contribute to the adenosylcob(III)alamin site.

The protein belongs to the EutC family. As to quaternary structure, the basic unit is a heterodimer which dimerizes to form tetramers. The heterotetramers trimerize; 6 large subunits form a core ring with 6 small subunits projecting outwards. It depends on adenosylcob(III)alamin as a cofactor.

It localises to the bacterial microcompartment. The enzyme catalyses ethanolamine = acetaldehyde + NH4(+). The protein operates within amine and polyamine degradation; ethanolamine degradation. Its function is as follows. Catalyzes the deamination of various vicinal amino-alcohols to oxo compounds. Allows this organism to utilize ethanolamine as the sole source of nitrogen and carbon in the presence of external vitamin B12. This is Ethanolamine ammonia-lyase small subunit from Salmonella dublin (strain CT_02021853).